Here is a 577-residue protein sequence, read N- to C-terminus: (E)-beta-farnesene synthase (577 aa).

Residues D327, D331, D474, S478, and E482 each contribute to the Mg(2+) site. The short motif at 327–331 (DDTFD) is the DDXXD motif element.

It belongs to the terpene synthase family. The cofactor is Mg(2+). Co(2+) serves as cofactor. It depends on Mn(2+) as a cofactor. As to expression, expressed in flowers.

It is found in the cytoplasm. It carries out the reaction (2E,6E)-farnesyl diphosphate = (E)-beta-farnesene + diphosphate. The protein operates within secondary metabolite biosynthesis; terpenoid biosynthesis. Its activity is regulated as follows. Strongly inhibited by manganese at concentration higher than 20 uM. In terms of biological role, sesquiterpene cyclase catalyzing the production of beta-farnesene from farnesyl diphosphate. Unable to use geranyl diphosphate as substrate. In Artemisia annua (Sweet wormwood), this protein is (E)-beta-farnesene synthase (CASC125).